A 699-amino-acid chain; its full sequence is Elongation factor G (699 aa).

Positions 10 to 292 constitute a tr-type G domain; that stretch reads DRTRNIGIMA…AVIDYLPSPT (283 aa). Residues 19–26, 90–94, and 144–147 each bind GTP; these read AHIDAGKT, DTPGH, and NKMD.

It belongs to the TRAFAC class translation factor GTPase superfamily. Classic translation factor GTPase family. EF-G/EF-2 subfamily.

It localises to the cytoplasm. In terms of biological role, catalyzes the GTP-dependent ribosomal translocation step during translation elongation. During this step, the ribosome changes from the pre-translocational (PRE) to the post-translocational (POST) state as the newly formed A-site-bound peptidyl-tRNA and P-site-bound deacylated tRNA move to the P and E sites, respectively. Catalyzes the coordinated movement of the two tRNA molecules, the mRNA and conformational changes in the ribosome. In Coxiella burnetii (strain Dugway 5J108-111), this protein is Elongation factor G.